The following is a 105-amino-acid chain: NADH-quinone oxidoreductase subunit K (105 aa).

3 consecutive transmembrane segments (helical) span residues 9-29 (PNYYLVLAAVLFTIGAAGVLV), 34-54 (IVLFMCVELMLNAANLTLVTF), and 65-85 (IIAFFVMVVAAAEVVVGLAII).

This sequence belongs to the complex I subunit 4L family. NDH-1 is composed of 14 different subunits. Subunits NuoA, H, J, K, L, M, N constitute the membrane sector of the complex.

It localises to the cell membrane. It carries out the reaction a quinone + NADH + 5 H(+)(in) = a quinol + NAD(+) + 4 H(+)(out). NDH-1 shuttles electrons from NADH, via FMN and iron-sulfur (Fe-S) centers, to quinones in the respiratory chain. The immediate electron acceptor for the enzyme in this species is believed to be a menaquinone. Couples the redox reaction to proton translocation (for every two electrons transferred, four hydrogen ions are translocated across the cytoplasmic membrane), and thus conserves the redox energy in a proton gradient. The sequence is that of NADH-quinone oxidoreductase subunit K from Salinispora arenicola (strain CNS-205).